The following is a 377-amino-acid chain: Odorant receptor 30a (377 aa).

Residues 1–34 (MELKSMDPVEMPIFGSTLKLMKFWSYLFVHNWRR) are Cytoplasmic-facing. The chain crosses the membrane as a helical span at residues 35–55 (YVAMTPYIIINCTQYVDIYLS). Residues 56–65 (TESLDFIIRN) lie on the Extracellular side of the membrane. The chain crosses the membrane as a helical span at residues 66–86 (VYLAVLFTNTVVRGVLLCVQR). The Cytoplasmic portion of the chain corresponds to 87–127 (FSYERFINILKSFYIELLQSDDPIINILVKETTRLSVLISR). A helical transmembrane segment spans residues 128 to 148 (INLLMGCCTCIGFVTYPIFGS). At 149-172 (ERVLPYGMYLPTIDEYKYASPYYE) the chain is on the extracellular side. A helical transmembrane segment spans residues 173 to 193 (IFFVIQAIMAPMGCCMYIPYT). The Cytoplasmic segment spans residues 194–254 (NMVVTFTLFA…SMNALNTHLH (61 aa)). The chain crosses the membrane as a helical span at residues 255-275 (LVEFLCFGAMLCVLLFSLIIA). The Extracellular portion of the chain corresponds to 276–280 (QTIAQ). A helical membrane pass occupies residues 281 to 301 (TVIVIAYMVMIFANSVVLYYV). The Cytoplasmic portion of the chain corresponds to 302–344 (ANELYFQSFDIAIAAYESNWMDFDVDTQKTLKFLIMRSQKPLA). A helical transmembrane segment spans residues 345–365 (ILVGGTYPMNLKMLQSLLNAI). Residues 366-377 (YSFFTLLRRVYG) are Extracellular-facing.

The protein belongs to the insect chemoreceptor superfamily. Heteromeric odorant receptor channel (TC 1.A.69) family. Or30a subfamily. In terms of assembly, interacts with Orco. Complexes exist early in the endomembrane system in olfactory sensory neurons (OSNs), coupling these complexes to the conserved ciliary trafficking pathway.

It localises to the cell membrane. Its function is as follows. Odorant receptor which mediates acceptance or avoidance behavior, depending on its substrates. The odorant receptor repertoire encodes a large collection of odor stimuli that vary widely in identity, intensity, and duration. May form a complex with Orco to form odorant-sensing units, providing sensitive and prolonged odorant signaling and calcium permeability. Involved in the behavioral responses to propyl acetate and anisole. This Drosophila melanogaster (Fruit fly) protein is Odorant receptor 30a (Or30a).